The chain runs to 119 residues: MITKPDKNVIRKKRHNRVRRTLSGTAERPRLNVYRSNKNIYAQLIDDNAGVTVASASTADKELAIGGGNVESAKQVGAAIAKRAIDKGYKSIVFDRGGYLYHGRIKALAEAAREEGLEF.

This sequence belongs to the universal ribosomal protein uL18 family. In terms of assembly, part of the 50S ribosomal subunit; part of the 5S rRNA/L5/L18/L25 subcomplex. Contacts the 5S and 23S rRNAs.

Functionally, this is one of the proteins that bind and probably mediate the attachment of the 5S RNA into the large ribosomal subunit, where it forms part of the central protuberance. This Oceanobacillus iheyensis (strain DSM 14371 / CIP 107618 / JCM 11309 / KCTC 3954 / HTE831) protein is Large ribosomal subunit protein uL18.